The following is a 72-amino-acid chain: Translation initiation factor IF-1 (72 aa).

An S1-like domain is found at methionine 1–lysine 72.

This sequence belongs to the IF-1 family. Component of the 30S ribosomal translation pre-initiation complex which assembles on the 30S ribosome in the order IF-2 and IF-3, IF-1 and N-formylmethionyl-tRNA(fMet); mRNA recruitment can occur at any time during PIC assembly.

Its subcellular location is the cytoplasm. One of the essential components for the initiation of protein synthesis. Stabilizes the binding of IF-2 and IF-3 on the 30S subunit to which N-formylmethionyl-tRNA(fMet) subsequently binds. Helps modulate mRNA selection, yielding the 30S pre-initiation complex (PIC). Upon addition of the 50S ribosomal subunit IF-1, IF-2 and IF-3 are released leaving the mature 70S translation initiation complex. This chain is Translation initiation factor IF-1, found in Thermus thermophilus (strain ATCC BAA-163 / DSM 7039 / HB27).